The primary structure comprises 166 residues: Large ribosomal subunit protein uL10 (166 aa).

It belongs to the universal ribosomal protein uL10 family. As to quaternary structure, part of the ribosomal stalk of the 50S ribosomal subunit. The N-terminus interacts with L11 and the large rRNA to form the base of the stalk. The C-terminus forms an elongated spine to which L12 dimers bind in a sequential fashion forming a multimeric L10(L12)X complex.

Its function is as follows. Forms part of the ribosomal stalk, playing a central role in the interaction of the ribosome with GTP-bound translation factors. The protein is Large ribosomal subunit protein uL10 of Alkaliphilus metalliredigens (strain QYMF).